The following is a 569-amino-acid chain: 3-(3-hydroxy-phenyl)propionate/3-hydroxycinnamic acid hydroxylase (569 aa).

Residues 12–41 and 277–287 contribute to the FAD site; these read DVVVVGAGPSGLTLANILGLQGVATLVVDE and FRKGRLMLAGD.

This sequence belongs to the PheA/TfdB FAD monooxygenase family. Requires FAD as cofactor.

It carries out the reaction 3-(3-hydroxyphenyl)propanoate + NADH + O2 + H(+) = 3-(2,3-dihydroxyphenyl)propanoate + NAD(+) + H2O. The catalysed reaction is (2E)-3-(3-hydroxyphenyl)prop-2-enoate + NADH + O2 + H(+) = (2E)-3-(2,3-dihydroxyphenyl)prop-2-enoate + NAD(+) + H2O. It participates in aromatic compound metabolism; 3-phenylpropanoate degradation. Catalyzes the insertion of one atom of molecular oxygen into position 2 of the phenyl ring of 3-(3-hydroxyphenyl)propionate (3-HPP) and hydroxycinnamic acid (3HCI). In Mycolicibacterium vanbaalenii (strain DSM 7251 / JCM 13017 / BCRC 16820 / KCTC 9966 / NRRL B-24157 / PYR-1) (Mycobacterium vanbaalenii), this protein is 3-(3-hydroxy-phenyl)propionate/3-hydroxycinnamic acid hydroxylase.